We begin with the raw amino-acid sequence, 70 residues long: Small ribosomal subunit protein bS21A (70 aa).

It belongs to the bacterial ribosomal protein bS21 family.

In Paraburkholderia xenovorans (strain LB400), this protein is Small ribosomal subunit protein bS21A.